Reading from the N-terminus, the 1765-residue chain is MGAMDDRRYSYPPPRTSYVQPSTHPSPTASDYRYRSPVLPQHPPTHHSPSSYSASLYGQPKEDPAIAYARMREEMRTAEEARREAEALEYRRKRDMEFAARRPGSELMDDPRRIPHSSFPRSQMYGPSADQSRVMPSRNGKDYISEPPSPSELYPTDEDTERLPIDRYRRDIDVPPLPRQLPPPPSEIGRMADRARSPSAPIAPPLLKVVRKRTKVIRPNDFLVGNEDVWEDGLIRYQSKREDEVRAIAQWAASCQVRNGVGEPSLPQTQDESIKVRKINGDIATPTNKKKRKSRKLNLDDELLGLASSPPGSPNAAAEAEKSESKHHIYGMNGPIDPANPPSPSTIVYPSGLTRAEVIAKCEAGDVEGLTEDDVKAVQDEMWMREKAAQAAENGGVLPTNKDGTVRRKPGPAKGWRKIRGIDKKKETTPGKAQSTTAGSVAGSVADEEAEADIAALLDDSIAKKGKKVKRRKLEEPGAESPRFADAEDEYNEHRPSDSVLLDEIEDEHSRAGSVGESNALDTLPAASAPPKKKNSKTKEPGVGKGRWTRPTKPEKELVKKAEALASRTSKASLAGPSDDTFGVGPGPAEEVQEEIKHEYAPNTHDPRGVSENEAKIRHELVEDLQKQAWSNIVRDVPRIYRVFQGYDQSMKQIAQRRAQACVRNAFGQRNQKTMQRQSGKVNKEGAAKAKRIVKELAAFWRKNEKDEVIARKKAEREALERAKAEEEARETKRQSRKLNFLLTQTELYSHFIGKKIKTKEAEAAEGMDVEEEEKRGMEEIAIGEDGEPLPDLDYDEDDEENLRKHAARGAQAAIQAARDKARAFDDSIVGRGAPLPGDDTMDGDELNFQNPSLGENSVTITQPKMLMAQLKEYQLKGLTWLGNLYEQGINGILADEMGLGKTIQSISLLAYLAEHHNLWGPFLVIAPASTLHNWQQELARFVPRLKALPYWGSPKDRETLRKIWSRKNQTFSEDSPFHILITSYQLAVQDEKYLQGMKWQYMILDEAQAIKSSSSARWKSLLSLHCRNRLLLTGTPIQNSMHELWALLHFIMPQLFDSHEEFAEWFSKDIESSSGGVTGNLKPEQLKRLHMILKPFMLRRVKKHVQKELGDKIEIDLLVDLSQRQREIYKALRQRVSITDLLATAENNTDNGNPKNMRSLVNLVMQFRKVCNHPDLFERADVVSPFVFGEFSQSGNLAREGDGMYLPDSARNAIEVQIPRILWTDGGKLDIPGEQSLAGSDTKILQNLLNIWTPEWINERTKCADAEFGFVKLVGSSPGETSRSAKSPVLVQLLEGAEKERRWTEEGRFVDDSEFAASVKKGFRVPSVIPVLTQPGQVSLREISRRVWDESYLSRDDARCIGDYAIAPIVKPIASNRSFLNAQDRILNQPLAHSTLYGLAPSELHDPLAAEQFSRIAPSVPLTGLIPSSASSQTPVSPLHIPPTKRLIVDSAKLARLDSLLRELKAGGHRVLLYFQMTKMMDLIEEYLIFRQYKYLRLDGSSPIAERRDMVTSWQTNPDIFVFCLSTRAGGLGINLTAADTVIFYDHDWNPSSDAQAMDRAHRVGQTKQVTVYRLVARGTIEERILQMARGKKDIQDVVVGTKSVSDVAKPSEIVSLFMDDEELAESVAKRKQAEAHGYIAPTIIPNGRRSQFGDGLVLDDGEGDDGFFNAAAAARANAEEEEGLGAEEESKGKGKAKAAAAVTFPVPGEKRSHKKGMGKKAQAAAAAAALERVIAGNEEPLAASKPPAKKKVKIALGPDGLPL.

Disordered stretches follow at residues 1–66 (MGAM…DPAI), 101–200 (RRPG…SPSA), 303–342 (LLGL…ANPP), 390–446 (QAAE…GSVA), and 458–588 (LDDS…GPGP). The segment covering 17 to 29 (SYVQPSTHPSPTA) has biased composition (polar residues). Basic and acidic residues-rich tracts occupy residues 101–113 (RRPG…DPRR) and 161–173 (ERLP…RDID). Over residues 175–186 (PPLPRQLPPPPS) the composition is skewed to pro residues. Over residues 304 to 318 (LGLASSPPGSPNAAA) the composition is skewed to low complexity. A compositionally biased stretch (basic residues) spans 407–419 (RRKPGPAKGWRKI). Composition is skewed to basic and acidic residues over residues 420–429 (RGIDKKKETT) and 552–563 (TKPEKELVKKAE). Positions 629–759 (AWSNIVRDVP…SHFIGKKIKT (131 aa)) constitute a DBINO domain. Residues 702 to 745 (RKNEKDEVIARKKAEREALERAKAEEEARETKRQSRKLNFLLTQ) are a coiled coil. A Helicase ATP-binding domain is found at 883-1055 (GNLYEQGING…WALLHFIMPQ (173 aa)). ATP is bound at residue 896 to 903 (DEMGLGKT). A DEAQ box motif is present at residues 1006–1009 (DEAQ). Residues 1457 to 1607 (RLDSLLRELK…DVVVGTKSVS (151 aa)) enclose the Helicase C-terminal domain. Disordered stretches follow at residues 1680–1700 (AEEE…KAKA) and 1740–1765 (EEPL…GLPL).

Belongs to the SNF2/RAD54 helicase family. In terms of assembly, component of the INO80 chromatin-remodeling complex.

The protein resides in the nucleus. The catalysed reaction is ATP + H2O = ADP + phosphate + H(+). Its function is as follows. ATPase component of the INO80 complex which remodels chromatin by shifting nucleosomes and is involved in DNA repair. The protein is Chromatin-remodeling ATPase INO80 (INO80) of Cryptococcus neoformans var. neoformans serotype D (strain B-3501A) (Filobasidiella neoformans).